Reading from the N-terminus, the 495-residue chain is 1-aminocyclopropane-1-carboxylate synthase 6 (495 aa).

The substrate site is built by Glu-58 and Tyr-96. At Lys-280 the chain carries N6-(pyridoxal phosphate)lysine. Residues Ser-480, Ser-483, and Ser-488 each carry the phosphoserine modification.

The protein belongs to the class-I pyridoxal-phosphate-dependent aminotransferase family. As to quaternary structure, homodimer and heterodimer. In vivo, the relevance of heterodimerization with other ACS enzymes is however unsure. Interacts with GRF3. Pyridoxal 5'-phosphate serves as cofactor. Post-translationally, phosphorylated on serine residue by MAP kinase (MPK6). May be processed at its C-terminus. In terms of tissue distribution, expressed in roots and flowers.

It catalyses the reaction S-adenosyl-L-methionine = 1-aminocyclopropane-1-carboxylate + S-methyl-5'-thioadenosine + H(+). It functions in the pathway alkene biosynthesis; ethylene biosynthesis via S-adenosyl-L-methionine; ethylene from S-adenosyl-L-methionine: step 1/2. 1-aminocyclopropane-1-carboxylate synthase (ACS) enzymes catalyze the conversion of S-adenosyl-L-methionine (SAM) into 1-aminocyclopropane-1-carboxylate (ACC), a direct precursor of ethylene. Involved in bacterial flagellin-induced ethylene production. In Arabidopsis thaliana (Mouse-ear cress), this protein is 1-aminocyclopropane-1-carboxylate synthase 6 (ACS6).